The chain runs to 197 residues: dCTP deaminase, dUMP-forming (197 aa).

DCTP is bound by residues 105 to 110, Asp-123, 131 to 133, Gln-152, Tyr-166, Lys-174, and Gln-178; these read RSSMGR and TLE. Residue Glu-133 is the Proton donor/acceptor of the active site.

This sequence belongs to the dCTP deaminase family. In terms of assembly, homotrimer.

The enzyme catalyses dCTP + 2 H2O = dUMP + NH4(+) + diphosphate. The protein operates within pyrimidine metabolism; dUMP biosynthesis; dUMP from dCTP: step 1/1. In terms of biological role, bifunctional enzyme that catalyzes both the deamination of dCTP to dUTP and the hydrolysis of dUTP to dUMP without releasing the toxic dUTP intermediate. In Methanosphaera stadtmanae (strain ATCC 43021 / DSM 3091 / JCM 11832 / MCB-3), this protein is dCTP deaminase, dUMP-forming.